Here is a 472-residue protein sequence, read N- to C-terminus: Protein nucleotidyltransferase YdiU (472 aa).

Glycine 86, glycine 88, arginine 89, lysine 109, aspartate 121, glycine 122, arginine 172, and arginine 179 together coordinate ATP. The active-site Proton acceptor is the aspartate 244. Residues asparagine 245 and aspartate 254 each coordinate Mg(2+). Aspartate 254 is an ATP binding site.

The protein belongs to the SELO family. Mg(2+) is required as a cofactor. It depends on Mn(2+) as a cofactor.

It catalyses the reaction L-seryl-[protein] + ATP = 3-O-(5'-adenylyl)-L-seryl-[protein] + diphosphate. The catalysed reaction is L-threonyl-[protein] + ATP = 3-O-(5'-adenylyl)-L-threonyl-[protein] + diphosphate. The enzyme catalyses L-tyrosyl-[protein] + ATP = O-(5'-adenylyl)-L-tyrosyl-[protein] + diphosphate. It carries out the reaction L-histidyl-[protein] + UTP = N(tele)-(5'-uridylyl)-L-histidyl-[protein] + diphosphate. It catalyses the reaction L-seryl-[protein] + UTP = O-(5'-uridylyl)-L-seryl-[protein] + diphosphate. The catalysed reaction is L-tyrosyl-[protein] + UTP = O-(5'-uridylyl)-L-tyrosyl-[protein] + diphosphate. In terms of biological role, nucleotidyltransferase involved in the post-translational modification of proteins. It can catalyze the addition of adenosine monophosphate (AMP) or uridine monophosphate (UMP) to a protein, resulting in modifications known as AMPylation and UMPylation. The protein is Protein nucleotidyltransferase YdiU of Ruegeria sp. (strain TM1040) (Silicibacter sp.).